Here is a 142-residue protein sequence, read N- to C-terminus: Large ribosomal subunit protein uL11 (142 aa).

The protein belongs to the universal ribosomal protein uL11 family. As to quaternary structure, part of the ribosomal stalk of the 50S ribosomal subunit. Interacts with L10 and the large rRNA to form the base of the stalk. L10 forms an elongated spine to which L12 dimers bind in a sequential fashion forming a multimeric L10(L12)X complex. One or more lysine residues are methylated.

Forms part of the ribosomal stalk which helps the ribosome interact with GTP-bound translation factors. The protein is Large ribosomal subunit protein uL11 of Pectobacterium atrosepticum (strain SCRI 1043 / ATCC BAA-672) (Erwinia carotovora subsp. atroseptica).